The sequence spans 191 residues: MEYFDMRKMSVNLWRNAAGETREICTFPPAKRDFYWRASIASIAANGEFSLFPGMERIVTLLEGGEMLLESADRFNHTLKPLQPFAFAADQVVKAKLTEGQMSMDFNIMTRLDVCKAKVRIAERTFTTFGSRGGVVFVINGAWQLGDKLLTTDQGACWFDGRHTLRLLQPQGKLLFSEINWLAGHSPDQVQ.

It belongs to the Ves family.

The polypeptide is Protein Ves (Shigella boydii serotype 18 (strain CDC 3083-94 / BS512)).